The following is a 217-amino-acid chain: Cytidylate kinase (217 aa).

An ATP-binding site is contributed by 10–18; sequence GPAGAGKST.

It belongs to the cytidylate kinase family. Type 1 subfamily.

The protein resides in the cytoplasm. It catalyses the reaction CMP + ATP = CDP + ADP. It carries out the reaction dCMP + ATP = dCDP + ADP. The chain is Cytidylate kinase from Clostridium botulinum (strain ATCC 19397 / Type A).